We begin with the raw amino-acid sequence, 135 residues long: Large ribosomal subunit protein bL19 (135 aa).

This sequence belongs to the bacterial ribosomal protein bL19 family.

Functionally, this protein is located at the 30S-50S ribosomal subunit interface and may play a role in the structure and function of the aminoacyl-tRNA binding site. The chain is Large ribosomal subunit protein bL19 from Xanthomonas oryzae pv. oryzae (strain KACC10331 / KXO85).